The primary structure comprises 38 residues: MKVRASVRKICENCRLIKRRGTVMVICSNNPKHKQRQG.

Belongs to the bacterial ribosomal protein bL36 family.

The protein localises to the plastid. It is found in the chloroplast. The protein is Large ribosomal subunit protein bL36c (rpl36) of Mesostigma viride (Green alga).